The chain runs to 669 residues: DNA ligase (669 aa).

Residues aspartate 35–aspartate 39, serine 84–leucine 85, and glutamate 116 each bind NAD(+). The N6-AMP-lysine intermediate role is filled by lysine 118. Residues arginine 139, glutamate 176, lysine 291, and lysine 315 each coordinate NAD(+). The Zn(2+) site is built by cysteine 409, cysteine 412, cysteine 427, and cysteine 432. The BRCT domain maps to threonine 591 to alanine 669.

It belongs to the NAD-dependent DNA ligase family. LigA subfamily. The cofactor is Mg(2+). Mn(2+) serves as cofactor.

The catalysed reaction is NAD(+) + (deoxyribonucleotide)n-3'-hydroxyl + 5'-phospho-(deoxyribonucleotide)m = (deoxyribonucleotide)n+m + AMP + beta-nicotinamide D-nucleotide.. Functionally, DNA ligase that catalyzes the formation of phosphodiester linkages between 5'-phosphoryl and 3'-hydroxyl groups in double-stranded DNA using NAD as a coenzyme and as the energy source for the reaction. It is essential for DNA replication and repair of damaged DNA. This is DNA ligase from Microcystis aeruginosa (strain NIES-843 / IAM M-2473).